Reading from the N-terminus, the 290-residue chain is Fructokinase (290 aa).

T130 serves as a coordination point for ATP. H153, C169, H172, and C175 together coordinate Zn(2+). Residues P183 and 231 to 235 contribute to the ATP site; that span reads GVMEK.

This sequence belongs to the ROK (NagC/XylR) family. In terms of assembly, homodimer. Mg(2+) serves as cofactor.

It catalyses the reaction D-fructose + ATP = D-fructose 6-phosphate + ADP + H(+). Its activity is regulated as follows. Inactivated by EDTA. Inhibition by zinc ions (Potential). The polypeptide is Fructokinase (scrK) (Lactococcus lactis subsp. cremoris (Streptococcus cremoris)).